Consider the following 84-residue polypeptide: DNA-directed RNA polymerase subunit Rpo5 (84 aa).

The protein belongs to the archaeal Rpo5/eukaryotic RPB5 RNA polymerase subunit family. In terms of assembly, part of the 13-subunit RNA polymerase.

The protein localises to the cytoplasm. It carries out the reaction RNA(n) + a ribonucleoside 5'-triphosphate = RNA(n+1) + diphosphate. Functionally, DNA-dependent RNA polymerase (RNAP) catalyzes the transcription of DNA into RNA using the four ribonucleoside triphosphates as substrates. Its function is as follows. Reconstitution experiments show this subunit is required for basic activity. The sequence is that of DNA-directed RNA polymerase subunit Rpo5 from Sulfolobus acidocaldarius (strain ATCC 33909 / DSM 639 / JCM 8929 / NBRC 15157 / NCIMB 11770).